Here is a 165-residue protein sequence, read N- to C-terminus: Endoribonuclease YbeY (165 aa).

Zn(2+) is bound by residues His130, His134, and His140.

This sequence belongs to the endoribonuclease YbeY family. Requires Zn(2+) as cofactor.

The protein resides in the cytoplasm. Functionally, single strand-specific metallo-endoribonuclease involved in late-stage 70S ribosome quality control and in maturation of the 3' terminus of the 16S rRNA. The chain is Endoribonuclease YbeY from Streptococcus pyogenes serotype M28 (strain MGAS6180).